The sequence spans 121 residues: Ribonuclease P protein component (121 aa).

Belongs to the RnpA family. In terms of assembly, consists of a catalytic RNA component (M1 or rnpB) and a protein subunit.

The catalysed reaction is Endonucleolytic cleavage of RNA, removing 5'-extranucleotides from tRNA precursor.. Functionally, RNaseP catalyzes the removal of the 5'-leader sequence from pre-tRNA to produce the mature 5'-terminus. It can also cleave other RNA substrates such as 4.5S RNA. The protein component plays an auxiliary but essential role in vivo by binding to the 5'-leader sequence and broadening the substrate specificity of the ribozyme. This chain is Ribonuclease P protein component, found in Neisseria meningitidis serogroup B (strain ATCC BAA-335 / MC58).